The following is a 505-amino-acid chain: Cytochrome c oxidase subunit 1 (505 aa).

Residues 14–34 (LLYLVFAFFGGLLGTSLSMLI) form a helical membrane-spanning segment. Ca(2+) is bound by residues Glu37 and Gly42. Transmembrane regions (helical) follow at residues 55-75 (VIIT…ALFG), 98-118 (NISF…TLVE), 143-163 (AILS…NMLV), 180-200 (LFVW…PVLA), 229-249 (LFWF…FGIV), and 261-281 (VFGL…GFIV). His60 contributes to the Fe(II)-heme a binding site. 2 residues coordinate Cu cation: His235 and Tyr239. The segment at residues 235–239 (HPEVY) is a cross-link (1'-histidyl-3'-tyrosine (His-Tyr)). O2 is bound at residue Tyr239. 2 residues coordinate Cu cation: His284 and His285. A run of 2 helical transmembrane segments spans residues 302 to 322 (ATMI…ATIY) and 332 to 352 (MWFA…GVVL). 2 residues coordinate Mg(2+): His362 and Asp363. A heme a3-binding site is contributed by His370. Position 372 (His372) interacts with Fe(II)-heme a. 3 consecutive transmembrane segments (helical) span residues 374 to 394 (VLSM…GNLI), 408 to 428 (FWLL…LGLA), and 446 to 466 (AVSS…ATTF).

This sequence belongs to the heme-copper respiratory oxidase family. As to quaternary structure, component of the cytochrome c oxidase (complex IV, CIV), a multisubunit enzyme composed of a catalytic core of 3 subunits and several supernumerary subunits. The complex exists as a monomer or a dimer and forms supercomplexes (SCs) in the inner mitochondrial membrane with ubiquinol-cytochrome c oxidoreductase (cytochrome b-c1 complex, complex III, CIII). Heme serves as cofactor. Requires Cu cation as cofactor.

It is found in the mitochondrion inner membrane. The catalysed reaction is 4 Fe(II)-[cytochrome c] + O2 + 8 H(+)(in) = 4 Fe(III)-[cytochrome c] + 2 H2O + 4 H(+)(out). The protein operates within energy metabolism; oxidative phosphorylation. Its function is as follows. Component of the cytochrome c oxidase, the last enzyme in the mitochondrial electron transport chain which drives oxidative phosphorylation. The respiratory chain contains 3 multisubunit complexes succinate dehydrogenase (complex II, CII), ubiquinol-cytochrome c oxidoreductase (cytochrome b-c1 complex, complex III, CIII) and cytochrome c oxidase (complex IV, CIV), that cooperate to transfer electrons derived from NADH and succinate to molecular oxygen, creating an electrochemical gradient over the inner membrane that drives transmembrane transport and the ATP synthase. Cytochrome c oxidase is the component of the respiratory chain that catalyzes the reduction of oxygen to water. Electrons originating from reduced cytochrome c in the intermembrane space (IMS) are transferred via the dinuclear copper A center (CU(A)) of subunit 2 and heme A of subunit 1 to the active site in subunit 1, a binuclear center (BNC) formed by heme A3 and copper B (CU(B)). The BNC reduces molecular oxygen to 2 water molecules using 4 electrons from cytochrome c in the IMS and 4 protons from the mitochondrial matrix. This is Cytochrome c oxidase subunit 1 (COX1) from Chlamydomonas reinhardtii (Chlamydomonas smithii).